A 513-amino-acid chain; its full sequence is Glutamyl-tRNA(Gln) amidotransferase subunit B, mitochondrial (513 aa).

Belongs to the GatB/GatE family. GatB subfamily. Subunit of the heterotrimeric GatFAB amidotransferase (AdT) complex, composed of A, B and F subunits.

It localises to the mitochondrion. It catalyses the reaction L-glutamyl-tRNA(Gln) + L-glutamine + ATP + H2O = L-glutaminyl-tRNA(Gln) + L-glutamate + ADP + phosphate + H(+). Its function is as follows. Allows the formation of correctly charged Gln-tRNA(Gln) through the transamidation of misacylated Glu-tRNA(Gln) in the mitochondria. The reaction takes place in the presence of glutamine and ATP through an activated gamma-phospho-Glu-tRNA(Gln). The protein is Glutamyl-tRNA(Gln) amidotransferase subunit B, mitochondrial of Debaryomyces hansenii (strain ATCC 36239 / CBS 767 / BCRC 21394 / JCM 1990 / NBRC 0083 / IGC 2968) (Yeast).